The following is a 142-amino-acid chain: MAKKVTGYLKLQVPAGAANPSPPIGPALGQRGLNIMEFCKNFNAQTQKEEKNTPIPVVITIYADRSFTFEMKTPPMSFFLKQAAKIQSGSKLPGRDVAGKVSSAQVREIAERKMKDLNCDSIESAMRMVEGSARSMGLQVEG.

This sequence belongs to the universal ribosomal protein uL11 family. In terms of assembly, part of the ribosomal stalk of the 50S ribosomal subunit. Interacts with L10 and the large rRNA to form the base of the stalk. L10 forms an elongated spine to which L12 dimers bind in a sequential fashion forming a multimeric L10(L12)X complex. Post-translationally, one or more lysine residues are methylated.

In terms of biological role, forms part of the ribosomal stalk which helps the ribosome interact with GTP-bound translation factors. The polypeptide is Large ribosomal subunit protein uL11 (Rhodopseudomonas palustris (strain BisA53)).